The chain runs to 323 residues: 4-hydroxy-3-methylbut-2-enyl diphosphate reductase (323 aa).

Cys12 lines the [4Fe-4S] cluster pocket. Residues His43 and His81 each contribute to the (2E)-4-hydroxy-3-methylbut-2-enyl diphosphate site. Dimethylallyl diphosphate is bound by residues His43 and His81. Positions 43 and 81 each coordinate isopentenyl diphosphate. Cys103 contributes to the [4Fe-4S] cluster binding site. His131 provides a ligand contact to (2E)-4-hydroxy-3-methylbut-2-enyl diphosphate. Residue His131 coordinates dimethylallyl diphosphate. Isopentenyl diphosphate is bound at residue His131. The active-site Proton donor is Glu133. Thr170 is a (2E)-4-hydroxy-3-methylbut-2-enyl diphosphate binding site. Residue Cys198 participates in [4Fe-4S] cluster binding. Residues Ser226, Asn228, and Ser271 each coordinate (2E)-4-hydroxy-3-methylbut-2-enyl diphosphate. Positions 226, 228, and 271 each coordinate dimethylallyl diphosphate. Isopentenyl diphosphate is bound by residues Ser226, Asn228, and Ser271.

This sequence belongs to the IspH family. The cofactor is [4Fe-4S] cluster.

The catalysed reaction is isopentenyl diphosphate + 2 oxidized [2Fe-2S]-[ferredoxin] + H2O = (2E)-4-hydroxy-3-methylbut-2-enyl diphosphate + 2 reduced [2Fe-2S]-[ferredoxin] + 2 H(+). It catalyses the reaction dimethylallyl diphosphate + 2 oxidized [2Fe-2S]-[ferredoxin] + H2O = (2E)-4-hydroxy-3-methylbut-2-enyl diphosphate + 2 reduced [2Fe-2S]-[ferredoxin] + 2 H(+). The protein operates within isoprenoid biosynthesis; dimethylallyl diphosphate biosynthesis; dimethylallyl diphosphate from (2E)-4-hydroxy-3-methylbutenyl diphosphate: step 1/1. It participates in isoprenoid biosynthesis; isopentenyl diphosphate biosynthesis via DXP pathway; isopentenyl diphosphate from 1-deoxy-D-xylulose 5-phosphate: step 6/6. In terms of biological role, catalyzes the conversion of 1-hydroxy-2-methyl-2-(E)-butenyl 4-diphosphate (HMBPP) into a mixture of isopentenyl diphosphate (IPP) and dimethylallyl diphosphate (DMAPP). Acts in the terminal step of the DOXP/MEP pathway for isoprenoid precursor biosynthesis. This Lysinibacillus sphaericus (strain C3-41) protein is 4-hydroxy-3-methylbut-2-enyl diphosphate reductase.